Consider the following 269-residue polypeptide: Arginine and glutamate-rich protein 1-B (269 aa).

Basic residues predominate over residues 1–57; the sequence is MGRSRSRSSSRSKHSKTSKHSKKRSRSRSRSRDRERKRRSKSRESKRNRRRESRSRS. A necessary and sufficient for RNA binding region spans residues 1-70; the sequence is MGRSRSRSSS…TATSRRDRER (70 aa). Disordered stretches follow at residues 1–109 and 233–269; these read MGRS…MERQ and RMKLEQERQKQQKEEQKMILGKGKSRPKLSFSLKASE. Composition is skewed to basic and acidic residues over residues 64–80, 89–109, and 233–249; these read SRRDRERAASPPERIDI, SAVDEKQKKEEEEKKVEMERQ, and RMKLEQERQKQQKEEQK. A necessary and sufficient for transcriptional regulation region spans residues 71 to 269; sequence AASPPERIDI…KLSFSLKASE (199 aa).

This sequence belongs to the ARGLU1 family.

It is found in the nucleus. Its subcellular location is the nucleus speckle. The protein localises to the chromosome. Functionally, dual function regulator of gene expression; regulator of transcription and modulator of alternative splicing. General coactivator of nuclear receptor-induced gene expression. The polypeptide is Arginine and glutamate-rich protein 1-B (arglu1b) (Danio rerio (Zebrafish)).